The chain runs to 222 residues: Glutathione S-transferase A2 (222 aa).

At alanine 2 the chain carries N-acetylalanine. Positions 3–83 (GKPVLHYFNA…YIATKYDLYG (81 aa)) constitute a GST N-terminal domain. At lysine 4 the chain carries N6-succinyllysine. Glutathione is bound by residues tyrosine 9, lysine 45, 54–55 (QV), and 67–68 (QT). The GST C-terminal domain maps to 85–208 (DMKERALIDM…HPGSQRKPPL (124 aa)).

This sequence belongs to the GST superfamily. Alpha family. As to quaternary structure, homodimer. Heterodimer of GSTA1 and GSTA2. In terms of tissue distribution, expressed in the kidney.

The catalysed reaction is RX + glutathione = an S-substituted glutathione + a halide anion + H(+). In terms of biological role, catalyzes the conjugation of glutathione to a large variety of electrophilic compounds. This chain is Glutathione S-transferase A2 (Gsta2), found in Mus musculus (Mouse).